We begin with the raw amino-acid sequence, 251 residues long: DNA repair protein RecO (251 aa).

It belongs to the RecO family.

Functionally, involved in DNA repair and RecF pathway recombination. This is DNA repair protein RecO from Staphylococcus saprophyticus subsp. saprophyticus (strain ATCC 15305 / DSM 20229 / NCIMB 8711 / NCTC 7292 / S-41).